A 420-amino-acid chain; its full sequence is MSTSYSFLLAGRELDVFLSFSGKIALDVDFGYDLSRNGIKAFKSESWKESSFKPIDLRTLEALTESKVAVVMTSDEEVSSVGFLEELIVIIEFQEKRSLTVIPVFLTKHPLDVEKVSQIFPERAKIWRTAIAKLDNIAAQYSFSRNLAVMHGTHRIKQIADDIRLMFLSSASSDFKGLAGMDRHMKALYALLALESDEKVRTIGIWGSSGVGKTTLARYTYAEISVKFQAHVFLENVENMKEMLLPSENFEGEDLRSVNHEMNEMAEAKQKHRKVLLIADGVNNIEQGKWIAENANWFAPGSRVILITQEKSLLVQSGVNHVYEVGSLRYDEALQLFSRFAFKQPYPSPDFERLSVRAVQLAGFLPVTIRLFGSFLTGRDKEEWEATLLKLNAKQGKDIKEVWKIMEALEDKDIVEASQR.

One can recognise a TIR domain in the interval 12–167 (RELDVFLSFS…QIADDIRLMF (156 aa)). Residue glutamate 86 is part of the active site. An NB-ARC domain is found at 185–406 (MKALYALLAL…KDIKEVWKIM (222 aa)).

In terms of tissue distribution, mostly expressed in leaves and flowers (mainly in sepals), and, at a lower intensity, in stems. Present at low levels in roots and seeds.

The protein localises to the cytoplasm. Its subcellular location is the nucleus. It carries out the reaction NAD(+) + H2O = ADP-D-ribose + nicotinamide + H(+). In terms of biological role, confers resistance to low temperatures by limiting chloroplast damage and cell death, thus maintaining growth homeostasis. Regulates steryl-esters and sterols accumulation. Limits leaf necrosis associated with virulent bacterial infection (e.g. Pseudomonas syringae pv. tomato DC3000). This is Disease resistance protein CHS1 from Arabidopsis thaliana (Mouse-ear cress).